The following is a 188-amino-acid chain: MSIKSDKWIRRMAQEHGMIEPFVERQVRGEHDSRVISFGVSSYGYDVRCADEFKVFTNINSATVDPKNFDAGSFVDVKSDVCIIPPNSFALARTVEYFRIPRNVLTICLGKSTYARCGIIVNVTPLEPEWEGHVTLEFSNTTTLPAKIYANEGVAQMLFLESDEECEVSYKDRGGKYQGQRGVTLPRT.

DCTP-binding positions include 111-116, 135-137, Q156, Y170, and Q180; these read KSTYAR and TLE. The active-site Proton donor/acceptor is the E137.

It belongs to the dCTP deaminase family. Homotrimer.

It carries out the reaction dCTP + H2O + H(+) = dUTP + NH4(+). It functions in the pathway pyrimidine metabolism; dUMP biosynthesis; dUMP from dCTP (dUTP route): step 1/2. Catalyzes the deamination of dCTP to dUTP. The polypeptide is dCTP deaminase (Pseudomonas putida (strain W619)).